Reading from the N-terminus, the 107-residue chain is SH3 domain-binding glutamic acid-rich-like protein 2 (107 aa).

The short motif at 61-67 (QGNPLPP) is the SH3-binding element.

It belongs to the SH3BGR family. As to expression, highly expressed in brain, placenta, liver and kidney. Expressed in retina.

Its subcellular location is the nucleus. This Homo sapiens (Human) protein is SH3 domain-binding glutamic acid-rich-like protein 2 (SH3BGRL2).